The chain runs to 252 residues: MQYPVDTHTHTLASTHAYSTIHDYLAVAKQKGIRLFATTDHGPAMADAPHFWHFVNLRVLPRMVDGVGILRGIEANIKNREGEIDYFGDYLSQLDIVLAGFHEPVFPPSDKATHTEAMINAIKSGKVDIITHPGNPAYPIDIEAVAAAAAEYGVALEINNSSFEVSRKGSEANCTAIAKAAKELGATLVMGSDSHVAFSLGGFDRALSIIEAVDYPKDKLLNRSPMALLNFLTQRGHQSVADLMPLFSDDIA.

The Zn(2+) site is built by histidine 8, histidine 10, histidine 16, histidine 41, glutamate 74, histidine 102, histidine 132, aspartate 193, and histidine 195.

This sequence belongs to the PHP family. It depends on Zn(2+) as a cofactor.

The chain is Probable phosphatase Shewana3_2794 from Shewanella sp. (strain ANA-3).